The primary structure comprises 136 residues: Small ribosomal subunit protein uS11c (136 aa).

The segment at 1–22 is disordered; that stretch reads MAKAIPKKGSRGRIGSRKSTRK.

It belongs to the universal ribosomal protein uS11 family. As to quaternary structure, part of the 30S ribosomal subunit.

It is found in the plastid. It localises to the chloroplast. This is Small ribosomal subunit protein uS11c from Lactuca sativa (Garden lettuce).